Consider the following 394-residue polypeptide: Isopentenyl-diphosphate delta-isomerase (394 aa).

10 to 11 (RK) contacts substrate. FMN is bound by residues Thr-67, 68–70 (GMT), Ser-101, and Asn-129. Residue 101–103 (SQR) coordinates substrate. Gln-168 is a binding site for substrate. Glu-169 contributes to the Mg(2+) binding site. FMN is bound by residues Lys-200, Ser-225, Thr-230, 279–281 (GMR), and 300–301 (AL).

This sequence belongs to the IPP isomerase type 2 family. Homooctamer. Dimer of tetramers. Requires FMN as cofactor. NADPH is required as a cofactor. It depends on Mg(2+) as a cofactor.

The protein resides in the cytoplasm. It catalyses the reaction isopentenyl diphosphate = dimethylallyl diphosphate. Involved in the biosynthesis of isoprenoids. Catalyzes the 1,3-allylic rearrangement of the homoallylic substrate isopentenyl (IPP) to its allylic isomer, dimethylallyl diphosphate (DMAPP). In Pyrococcus furiosus (strain ATCC 43587 / DSM 3638 / JCM 8422 / Vc1), this protein is Isopentenyl-diphosphate delta-isomerase.